Here is a 102-residue protein sequence, read N- to C-terminus: uncharacterized protein (102 aa).

Transmembrane regions (helical) follow at residues 28-48 and 81-101; these read YLNL…LISI and LSVL…AGIG.

It localises to the membrane. This is an uncharacterized protein from Saccharomyces cerevisiae (strain ATCC 204508 / S288c) (Baker's yeast).